An 86-amino-acid chain; its full sequence is Large ribosomal subunit protein bL27 (86 aa).

The segment covering 1–10 (MAQKKGGGST) has biased composition (gly residues). The segment at 1-20 (MAQKKGGGSTRNGRDSESKR) is disordered.

The protein belongs to the bacterial ribosomal protein bL27 family.

The chain is Large ribosomal subunit protein bL27 from Bordetella parapertussis (strain 12822 / ATCC BAA-587 / NCTC 13253).